A 1139-amino-acid polypeptide reads, in one-letter code: Dual 3',5'-cyclic-AMP and -GMP phosphodiesterase beta (1139 aa).

2 disordered regions span residues 1–42 and 154–177; these read MGKV…NINK and GISEDNRQNQRNADNNSLNWSTSN. At 1 to 429 the chain is on the cytoplasmic side; that stretch reads MGKVEDFEEH…LNLNNWISSR (429 aa). The segment covering 9 to 22 has biased composition (basic and acidic residues); that stretch reads EHNKNSNQDIEKNV. Residues 29–42 are compositionally biased toward polar residues; that stretch reads NSNTINDQNENINK. The helical transmembrane segment at 430 to 450 threads the bilayer; that stretch reads MIIIGIVMLILSFIIWPLTTW. Over 451-462 the chain is Extracellular; it reads SLKTSTWGRETY. The helical transmembrane segment at 463–483 threads the bilayer; the sequence is IIILFHTLMAINTLILIFFII. Topologically, residues 484–498 are cytoplasmic; the sequence is IGSTELCKYSECMSY. Residues 499–519 traverse the membrane as a helical segment; the sequence is VLFSLMVALWGLWNIAIGLTL. Residues 520-536 lie on the Extracellular side of the membrane; it reads EYNPNLSEMPTTTYELE. Asn-524 is a glycosylation site (N-linked (GlcNAc...) asparagine). A helical transmembrane segment spans residues 537–557; the sequence is MIYVLTYIYGFLPLVIIDIFF. At 558-564 the chain is on the cytoplasmic side; the sequence is PSRTKYN. The chain crosses the membrane as a helical span at residues 565–585; the sequence is WIIHLIFIFLNSSSIILVGSA. The Extracellular segment spans residues 586-592; it reads KPDFVPE. Residues 593 to 613 traverse the membrane as a helical segment; the sequence is IYVVFRILAYTTLCIFLYIGS. Topologically, residues 614-1139 are cytoplasmic; it reads YTSELQIRYV…TLFFIKNVSD (526 aa). A PDEase domain is found at 775–1098; it reads INISQLTKMI…IMWDTLMKEE (324 aa). His-847 (proton donor) is an active-site residue. 847–851 is an a nucleoside 3',5'-cyclic phosphate binding site; the sequence is HNTIH. His-851, His-887, Asp-888, and Asp-1000 together coordinate a divalent metal cation. Residues Asp-888, Asp-1000, and Gln-1052 each contribute to the a nucleoside 3',5'-cyclic phosphate site.

It belongs to the cyclic nucleotide phosphodiesterase family. A divalent metal cation is required as a cofactor.

It is found in the cell membrane. The protein localises to the endoplasmic reticulum membrane. It carries out the reaction 3',5'-cyclic GMP + H2O = GMP + H(+). The catalysed reaction is 3',5'-cyclic AMP + H2O = AMP + H(+). Its pathway is purine metabolism; 3',5'-cyclic GMP degradation; GMP from 3',5'-cyclic GMP: step 1/1. It participates in purine metabolism; 3',5'-cyclic AMP degradation; AMP from 3',5'-cyclic AMP: step 1/1. Plays a role in signal transduction by regulating the intracellular concentration of cyclic nucleotides cAMP and cGMP. Catalyzes the hydrolysis of both cAMP and cGMP to 5'-AMP and 5'-GMP, respectively. By regulating cAMP levels during the asexual blood stage and, thus PKA activation, required for merozoite invasion of erythrocytes and for the parasite development immediately following invasion. In Plasmodium falciparum (isolate 3D7), this protein is Dual 3',5'-cyclic-AMP and -GMP phosphodiesterase beta.